A 203-amino-acid chain; its full sequence is E3 ubiquitin-protein ligase RNF152 (203 aa).

The segment at 12–55 (CQICFNYYSPRRRPKLLDCKHTCCSVCLQQMRTSQKDVRCPWCR) adopts an RING-type zinc-finger fold. Residues 106 to 165 (ISKERTLLPGDMGCRLLPGSQQKSLTVVTIPAEQQPLQGGAPPEAVEEEPDRRGVVKSST) form a necessary for interaction with RRAGA region. Positions 139–158 (QQPLQGGAPPEAVEEEPDRR) are disordered. Residues 167–187 (SGVCTVILVACVLVFLLGIVL) form a helical membrane-spanning segment.

This sequence belongs to the RNF152 family. Interacts with RRAGA (inactive GDP-bound form); stimulated by amino acid starvation. Interacts with SEC16A. Post-translationally, ubiquitinated. Autoubiquitinated in vitro, leading to its degradation by the proteasome.

The protein localises to the lysosome membrane. It catalyses the reaction S-ubiquitinyl-[E2 ubiquitin-conjugating enzyme]-L-cysteine + [acceptor protein]-L-lysine = [E2 ubiquitin-conjugating enzyme]-L-cysteine + N(6)-ubiquitinyl-[acceptor protein]-L-lysine.. It functions in the pathway protein modification; protein ubiquitination. Its function is as follows. E3 ubiquitin-protein ligase that acts as a negative regulator of mTORC1 signaling by mediating ubiquitination of RagA/RRAGA and RHEB. Catalyzes 'Lys-63'-linked polyubiquitination of RagA/RRAGA in response to amino acid starvation, thereby regulating mTORC1 signaling. Also mediates monoubiquitination of RHEB, promoting its association with the TSC-TBC complex and subsequent inhibition. Also mediates 'Lys-48'-linked polyubiquitination of target proteins and their subsequent targeting to the proteasome for degradation. Induces apoptosis when overexpressed. This Mus musculus (Mouse) protein is E3 ubiquitin-protein ligase RNF152.